A 350-amino-acid polypeptide reads, in one-letter code: Guanine nucleotide-binding protein G(t) subunit alpha (350 aa).

The interval 1–21 (MGAGASAEEKHSRELEKKLKE) is disordered. A lipid anchor (N-myristoyl glycine) is attached at Gly2. Positions 7–21 (AEEKHSRELEKKLKE) are enriched in basic and acidic residues. One can recognise a G-alpha domain in the interval 28–350 (RTVKLLLLGA…KENLKDCGLF (323 aa)). The G1 motif stretch occupies residues 31–44 (KLLLLGAGESGKST). Residues 36–43 (GAGESGKS), 171–177 (LRSRVKT), 196–200 (DVGGQ), 265–268 (NKKD), and Ala322 each bind GTP. Ser43 and Thr177 together coordinate Mg(2+). The G2 motif stretch occupies residues 169–177 (DVLRSRVKT). The interval 192 to 201 (FRMFDVGGQR) is G3 motif. A G4 motif region spans residues 261–268 (VLFLNKKD). The interval 320–325 (TCATDT) is G5 motif.

This sequence belongs to the G-alpha family. G(i/o/t/z) subfamily. As to quaternary structure, g proteins are composed of 3 units; alpha, beta and gamma. The alpha chain contains the guanine nucleotide binding site.

Guanine nucleotide-binding proteins (G proteins) are involved as modulators or transducers in various transmembrane signaling systems. Transducin is an amplifier and one of the transducers of a visual impulse that performs the coupling between rhodopsin and cGMP-phosphodiesterase. The sequence is that of Guanine nucleotide-binding protein G(t) subunit alpha (gnat) from Xenopus laevis (African clawed frog).